Here is a 311-residue protein sequence, read N- to C-terminus: tRNA-cytidine(32) 2-sulfurtransferase (311 aa).

Positions 47-52 (SGGKDS) match the PP-loop motif motif. Cysteine 122, cysteine 125, and cysteine 213 together coordinate [4Fe-4S] cluster.

Belongs to the TtcA family. As to quaternary structure, homodimer. Mg(2+) serves as cofactor. The cofactor is [4Fe-4S] cluster.

The protein localises to the cytoplasm. The catalysed reaction is cytidine(32) in tRNA + S-sulfanyl-L-cysteinyl-[cysteine desulfurase] + AH2 + ATP = 2-thiocytidine(32) in tRNA + L-cysteinyl-[cysteine desulfurase] + A + AMP + diphosphate + H(+). It participates in tRNA modification. In terms of biological role, catalyzes the ATP-dependent 2-thiolation of cytidine in position 32 of tRNA, to form 2-thiocytidine (s(2)C32). The sulfur atoms are provided by the cysteine/cysteine desulfurase (IscS) system. The sequence is that of tRNA-cytidine(32) 2-sulfurtransferase from Klebsiella pneumoniae subsp. pneumoniae (strain ATCC 700721 / MGH 78578).